We begin with the raw amino-acid sequence, 243 residues long: Probable transcriptional regulatory protein Tbd_2215 (243 aa).

It belongs to the TACO1 family.

The protein localises to the cytoplasm. The sequence is that of Probable transcriptional regulatory protein Tbd_2215 from Thiobacillus denitrificans (strain ATCC 25259 / T1).